A 285-amino-acid chain; its full sequence is Bifunctional protein FolD (285 aa).

NADP(+) is bound by residues 169-171, Ser-194, and Ile-235; that span reads GRS.

It belongs to the tetrahydrofolate dehydrogenase/cyclohydrolase family. As to quaternary structure, homodimer.

The catalysed reaction is (6R)-5,10-methylene-5,6,7,8-tetrahydrofolate + NADP(+) = (6R)-5,10-methenyltetrahydrofolate + NADPH. The enzyme catalyses (6R)-5,10-methenyltetrahydrofolate + H2O = (6R)-10-formyltetrahydrofolate + H(+). It functions in the pathway one-carbon metabolism; tetrahydrofolate interconversion. Catalyzes the oxidation of 5,10-methylenetetrahydrofolate to 5,10-methenyltetrahydrofolate and then the hydrolysis of 5,10-methenyltetrahydrofolate to 10-formyltetrahydrofolate. The protein is Bifunctional protein FolD of Microcystis aeruginosa (strain NIES-843 / IAM M-2473).